A 559-amino-acid chain; its full sequence is Membrane protein insertase YidC (559 aa).

A helical transmembrane segment spans residues 6-26 (TVLWMIFSFSLLLLWNNWQIH). Positions 34-80 (GGPSPEQNAPATANNQAATNPASNTPAVPNAPAATSAPSSVPGSTAP) are disordered. Low complexity predominate over residues 42-80 (APATANNQAATNPASNTPAVPNAPAATSAPSSVPGSTAP). The next 4 membrane-spanning stretches (helical) occupy residues 367–387 (LLGNWGWTIVALTVIIKAVFY), 441–461 (LPMVVQIPVFIALYWVLLASV), 480–500 (PYFILPAVMMATMFLQIKLNP), and 510–530 (VMMVMPLVFGGMMFFFPAGLV).

Belongs to the OXA1/ALB3/YidC family. Type 1 subfamily. Interacts with the Sec translocase complex via SecD. Specifically interacts with transmembrane segments of nascent integral membrane proteins during membrane integration.

It localises to the cell inner membrane. Functionally, required for the insertion and/or proper folding and/or complex formation of integral membrane proteins into the membrane. Involved in integration of membrane proteins that insert both dependently and independently of the Sec translocase complex, as well as at least some lipoproteins. Aids folding of multispanning membrane proteins. This is Membrane protein insertase YidC from Bordetella avium (strain 197N).